The primary structure comprises 353 residues: Guanidino acid hydrolase, mitochondrial (353 aa).

The N-terminal 33 residues, methionine 1–glutamine 33, are a transit peptide targeting the mitochondrion. A disordered region spans residues proline 29–valine 52. Histidine 163 and histidine 188 together coordinate Mn(2+). Lysine 194 is modified (N6-acetyllysine). Lysine 218 is modified (N6-acetyllysine; alternate). Lysine 218 is subject to N6-succinyllysine; alternate. Aspartate 279 lines the Mn(2+) pocket.

The protein belongs to the arginase family. Agmatinase subfamily. It depends on Mn(2+) as a cofactor.

Its subcellular location is the mitochondrion. The enzyme catalyses 3-guanidinopropanoate + H2O = urea + beta-alanine. It catalyses the reaction 4-guanidinobutanoate + H2O = urea + 4-aminobutanoate. The catalysed reaction is taurocyamine + H2O = urea + taurine. It carries out the reaction L-arginine + H2O = urea + L-ornithine. It functions in the pathway nitrogen metabolism; urea cycle; L-ornithine and urea from L-arginine: step 1/1. In terms of biological role, hydrolyzes linear guanidino acids to form urea and the corresponding amines. Displays specificity for substrates having a negatively charged head group and short chains including taurocyamine, guanidino propanoic and butanoic acids. May protect cells by detoxifying potentially harmful amounts of guanidino acids. Metabolizes L-arginine with low efficiency. This is Guanidino acid hydrolase, mitochondrial (Agmat) from Rattus norvegicus (Rat).